Here is a 469-residue protein sequence, read N- to C-terminus: ATP synthase subunit beta (469 aa).

An ATP-binding site is contributed by Gly157–Thr164.

The protein belongs to the ATPase alpha/beta chains family. F-type ATPases have 2 components, CF(1) - the catalytic core - and CF(0) - the membrane proton channel. CF(1) has five subunits: alpha(3), beta(3), gamma(1), delta(1), epsilon(1). CF(0) has three main subunits: a(1), b(2) and c(9-12). The alpha and beta chains form an alternating ring which encloses part of the gamma chain. CF(1) is attached to CF(0) by a central stalk formed by the gamma and epsilon chains, while a peripheral stalk is formed by the delta and b chains.

Its subcellular location is the cell membrane. It carries out the reaction ATP + H2O + 4 H(+)(in) = ADP + phosphate + 5 H(+)(out). Its function is as follows. Produces ATP from ADP in the presence of a proton gradient across the membrane. The catalytic sites are hosted primarily by the beta subunits. This Brevibacillus brevis (strain 47 / JCM 6285 / NBRC 100599) protein is ATP synthase subunit beta.